Consider the following 248-residue polypeptide: MAGHSKWANIKHRKERQDAKRGKVFTKWIRELTVAAKQGGPDPASNPRLRLALDKALGANMSRDIIDRAVARGAGTNESDNVEELSYEGYGPGGVAIMVEAMTDNRNRTAAAVRHAFTKCGGNLGTDGSVAYLFERKGQISFAPGVEEDALMEAAMEADADDVVANDDGSFDVFTSFNSFYAVRNALEEAGFKAADAEIVMQPTTSAELDQDGAEKVLKLIDMLEDLDDVQNVYSNAQISDEIMENLG.

Positions Met-1–Arg-21 are disordered.

Belongs to the TACO1 family.

It is found in the cytoplasm. The chain is Probable transcriptional regulatory protein PP_1214 from Pseudomonas putida (strain ATCC 47054 / DSM 6125 / CFBP 8728 / NCIMB 11950 / KT2440).